The primary structure comprises 521 residues: Probable protein kinase UbiB (521 aa).

Positions 119-497 (SFEREPVASA…QKLTNRLLQA (379 aa)) constitute a Protein kinase domain. ATP-binding positions include 125–133 (VASASIAQV) and Lys-151. Asp-286 functions as the Proton acceptor in the catalytic mechanism. Residues 496 to 516 (QAIVSAGIGFVIALILLQLVV) form a helical membrane-spanning segment.

It belongs to the ABC1 family. UbiB subfamily.

The protein resides in the cell inner membrane. The protein operates within cofactor biosynthesis; ubiquinone biosynthesis [regulation]. In terms of biological role, is probably a protein kinase regulator of UbiI activity which is involved in aerobic coenzyme Q (ubiquinone) biosynthesis. The chain is Probable protein kinase UbiB from Delftia acidovorans (strain DSM 14801 / SPH-1).